The chain runs to 95 residues: Antitoxin VapB (95 aa).

Antitoxin component of a type II toxin-antitoxin (TA) system. Partially neutralizes the RNase activity of cognate toxin VapC. This Rickettsia bellii (strain RML369-C) protein is Antitoxin VapB.